The following is a 178-amino-acid chain: MSRIGKRIIEIPSSVQASVEGSKLLFKNSKEKHELETHNRVKITLENNQLSFQPVGEDAQSRAYWGTYGALANNIVIGLSTGFSKTLEVNGVGYKVALGNKTLDLSLGFSHPVKYPIPAGIEMVVEKNTITIKGSDKQKVGQVAAEIRSFRPPEPYKGKGVKYSDEVIIRKAGKTAKK.

The protein belongs to the universal ribosomal protein uL6 family. As to quaternary structure, part of the 50S ribosomal subunit.

This protein binds to the 23S rRNA, and is important in its secondary structure. It is located near the subunit interface in the base of the L7/L12 stalk, and near the tRNA binding site of the peptidyltransferase center. The sequence is that of Large ribosomal subunit protein uL6 from Helicobacter pylori (strain Shi470).